A 139-amino-acid chain; its full sequence is NADPH-dependent 7-cyano-7-deazaguanine reductase (139 aa).

Residue cysteine 34 is the Thioimide intermediate of the active site. The Proton donor role is filled by aspartate 41. Substrate contacts are provided by residues 56 to 58 (VEL) and 75 to 76 (HE).

This sequence belongs to the GTP cyclohydrolase I family. QueF type 1 subfamily.

Its subcellular location is the cytoplasm. The enzyme catalyses 7-aminomethyl-7-carbaguanine + 2 NADP(+) = 7-cyano-7-deazaguanine + 2 NADPH + 3 H(+). Its pathway is tRNA modification; tRNA-queuosine biosynthesis. In terms of biological role, catalyzes the NADPH-dependent reduction of 7-cyano-7-deazaguanine (preQ0) to 7-aminomethyl-7-deazaguanine (preQ1). This chain is NADPH-dependent 7-cyano-7-deazaguanine reductase, found in Nitrosospira multiformis (strain ATCC 25196 / NCIMB 11849 / C 71).